Here is a 179-residue protein sequence, read N- to C-terminus: Natural killer cells antigen CD94 (179 aa).

At 1–10 (MAVFKTTLWR) the chain is on the cytoplasmic side. The chain crosses the membrane as a helical; Signal-anchor for type II membrane protein span at residues 11–31 (LISGTLGIICLSLMSTLGILL). Residues 32 to 179 (KNSFTKLSIE…NRYICKQQLI (148 aa)) lie on the Extracellular side of the membrane. 2 disulfide bridges follow: Cys58–Cys70 and Cys61–Cys72. The 108-residue stretch at 68–175 (YRCNCYFISS…CEDKNRYICK (108 aa)) folds into the C-type lectin domain. Residues Asn83 and Asn132 are each glycosylated (N-linked (GlcNAc...) asparagine). 2 disulfides stabilise this stretch: Cys89/Cys174 and Cys152/Cys166.

Can form disulfide-bonded heterodimer with NKG2 family members KLRC1 and KLRC2. KLRD1-KLRC1 heterodimer interacts with peptide-bound HLA-E-B2M heterotrimeric complex. KLRD1 plays a prominent role in directly interacting with HLA-E. KLRD1-KLRC1 interacts with much higher affinity with peptide-bound HLA-E-B2M than KLRD1-KLRC2. Interacts with the adapter protein TYROBP/DAP12; this interaction is required for cell surface expression and cell activation. In terms of tissue distribution, expressed in NK cell subsets (at protein level). Expressed in memory/effector CD8-positive alpha-beta T cell subsets (at protein level). Expressed in melanoma-specific cytotoxic T cell clones (at protein level). Expressed in terminally differentiated cytotoxic gamma-delta T cells (at protein level). KLRD1-KLRC1 and KLRD1-KLRC2 are differentially expressed in NK and T cell populations, with only minor subsets expressing both receptor complexes (at protein level).

Its subcellular location is the cell membrane. Its function is as follows. Immune receptor involved in self-nonself discrimination. In complex with KLRC1 or KLRC2 on cytotoxic and regulatory lymphocyte subsets, recognizes non-classical major histocompatibility (MHC) class Ib molecule HLA-E loaded with self-peptides derived from the signal sequence of classical MHC class Ia and non-classical MHC class Ib molecules. Enables cytotoxic cells to monitor the expression of MHC class I molecules in healthy cells and to tolerate self. Primarily functions as a ligand binding subunit as it lacks the capacity to signal. Functionally, KLRD1-KLRC1 acts as an immune inhibitory receptor. Key inhibitory receptor on natural killer (NK) cells that regulates their activation and effector functions. Dominantly counteracts T cell receptor signaling on a subset of memory/effector CD8-positive T cells as part of an antigen-driven response to avoid autoimmunity. On intraepithelial CD8-positive gamma-delta regulatory T cells triggers TGFB1 secretion, which in turn limits the cytotoxic programming of intraepithelial CD8-positive alpha-beta T cells, distinguishing harmless from pathogenic antigens. In HLA-E-rich tumor microenvironment, acts as an immune inhibitory checkpoint and may contribute to progressive loss of effector functions of NK cells and tumor-specific T cells, a state known as cell exhaustion. Upon HLA-E-peptide binding, transmits intracellular signals through KLRC1 immunoreceptor tyrosine-based inhibition motifs (ITIMs) by recruiting INPP5D/SHIP-1 and INPPL1/SHIP-2 tyrosine phosphatases to ITIMs, and ultimately opposing signals transmitted by activating receptors through dephosphorylation of proximal signaling molecules. KLRD1-KLRC2 acts as an immune activating receptor. On cytotoxic lymphocyte subsets recognizes HLA-E loaded with signal sequence-derived peptides from non-classical MHC class Ib HLA-G molecules, likely playing a role in the generation and effector functions of adaptive NK cells and in maternal-fetal tolerance during pregnancy. Regulates the effector functions of terminally differentiated cytotoxic lymphocyte subsets, and in particular may play a role in adaptive NK cell response to viral infection. Upon HLA-E-peptide binding, transmits intracellular signals via the adapter protein TYROBP/DAP12, triggering the phosphorylation of proximal signaling molecules and cell activation. In terms of biological role, (Microbial infection) Viruses like human cytomegalovirus have evolved an escape mechanism whereby virus-induced down-regulation of host MHC class I molecules is coupled to the binding of viral peptides to HLA-E, restoring HLA-E expression and inducing HLA-E-dependent NK cell immune tolerance to infected cells. Recognizes HLA-E in complex with human cytomegalovirus UL40-derived peptide (VMAPRTLIL) and inhibits NK cell cytotoxicity. Its function is as follows. (Microbial infection) May recognize HLA-E in complex with HIV-1 gag/Capsid protein p24-derived peptide (AISPRTLNA) on infected cells and may inhibit NK cell cytotoxicity, a mechanism that allows HIV-1 to escape immune recognition. Functionally, (Microbial infection) Upon SARS-CoV-2 infection, may contribute to functional exhaustion of cytotoxic NK cells and CD8-positive T cells. On NK cells, may recognize HLA-E in complex with SARS-CoV-2 S/Spike protein S1-derived peptide (LQPRTFLL) expressed on the surface of lung epithelial cells, inducing NK cell exhaustion and dampening antiviral immune surveillance. This chain is Natural killer cells antigen CD94 (KLRD1), found in Homo sapiens (Human).